A 461-amino-acid polypeptide reads, in one-letter code: MAVSLWQQCIGRLQDELPAQQFSMWIRPLQAEMDGDTLVLYAPNRFVLDWVREKYINIINQFFTEQMGSDAPKLRFDIGSRPSAKKFEPAPVATVRAPNTQTKATVGTYFNTQAEPIANANHRSNINPTYQFDNFVEGKSNQLGKAAALQVAENPGGAYNPLFLYGGTGLGKTHLLHAVGNGIIKNNPNAKVVYMHSERFVQDMVKALQNNAIEEFKRYYRSVDALFIDDIQFFANKDRSQEEFFHTFNALLEGNHQIILTSDRYPKEIDGVEDRLKSRFGWGLTVAIEPPELETRVAILMRKAQESGINLPDEVAFFIAKRLRSNVRELEGALNRVIANANFTGRPITIDFVREALRDLLALQEKLVTIDNIQKTVAEYYKIKMADMLSKRRSRSVARPRQVAMALSKELTNQSLPEIGDAFGGRDHTTVLHACRKIAQLREESHDIKEDYANLIRTLSS.

Residues 1-84 (MAVSLWQQCI…RFDIGSRPSA (84 aa)) are domain I, interacts with DnaA modulators. A domain II region spans residues 84–124 (AKKFEPAPVATVRAPNTQTKATVGTYFNTQAEPIANANHRS). A domain III, AAA+ region region spans residues 125-341 (NINPTYQFDN…GALNRVIANA (217 aa)). Glycine 169, glycine 171, lysine 172, and threonine 173 together coordinate ATP. The tract at residues 342–461 (NFTGRPITID…YANLIRTLSS (120 aa)) is domain IV, binds dsDNA.

The protein belongs to the DnaA family. Oligomerizes as a right-handed, spiral filament on DNA at oriC.

The protein resides in the cytoplasm. In terms of biological role, plays an essential role in the initiation and regulation of chromosomal replication. ATP-DnaA binds to the origin of replication (oriC) to initiate formation of the DNA replication initiation complex once per cell cycle. Binds the DnaA box (a 9 base pair repeat at the origin) and separates the double-stranded (ds)DNA. Forms a right-handed helical filament on oriC DNA; dsDNA binds to the exterior of the filament while single-stranded (ss)DNA is stabiized in the filament's interior. The ATP-DnaA-oriC complex binds and stabilizes one strand of the AT-rich DNA unwinding element (DUE), permitting loading of DNA polymerase. After initiation quickly degrades to an ADP-DnaA complex that is not apt for DNA replication. Binds acidic phospholipids. The chain is Chromosomal replication initiator protein DnaA from Shewanella putrefaciens (strain CN-32 / ATCC BAA-453).